Reading from the N-terminus, the 845-residue chain is BLOC-2 complex member HPS5 homolog (845 aa).

Residues 239-268 form a disordered region; it reads PTEEDLEDAKSMEGSDDNDNDQRSSPSGVK.

This sequence belongs to the HPS5 family.

Has a role in the biogenesis of eye pigment granules. Eye pigment granules are specialized forms of late endosomes or lysosomes. Biogenesis of pigment granules in the eye requires molecular components required for protein delivery to lysosomes. The sequence is that of BLOC-2 complex member HPS5 homolog from Aedes aegypti (Yellowfever mosquito).